An 870-amino-acid chain; its full sequence is Dynamin-2 (870 aa).

The 267-residue stretch at 28-294 folds into the Dynamin-type G domain; that stretch reads HLDLPQIAVV…LTNHIRESLP (267 aa). The interval 38 to 45 is G1 motif; the sequence is GGQSAGKS. 7 residues coordinate GDP: Ser41, Gly43, Lys44, Ser45, Ser46, Arg59, and Gly60. Positions 64-66 are G2 motif; that stretch reads VTR. Residues 136–139 form a G3 motif region; sequence DLPG. Residues 205-208 are G4 motif; sequence TKLD. The GDP site is built by Lys206, Asp208, and Asp211. Tyr231 bears the Phosphotyrosine mark. The interval 235–238 is G5 motif; it reads VNRS. GDP contacts are provided by Asn236, Arg237, and Gln239. Lys299 carries the post-translational modification N6-acetyllysine. A PH domain is found at 519-625; it reads LVIRRGWLTI…WKASFLRAGV (107 aa). Position 597 is a phosphotyrosine (Tyr597). Lys598 carries the N6-acetyllysine modification. The GED domain maps to 653–744; that stretch reads VETIRNLVDS…IIGDISTSTV (92 aa). The tract at residues 741–870 is disordered; it reads TSTVSTPVPP…IRPAEPSLLD (130 aa). Phosphothreonine is present on Thr755. Residues 756–767 are compositionally biased toward polar residues; the sequence is WLQNTSGHSPTP. A Phosphoserine; by CDK1 modification is found at Ser764. Positions 826 to 846 are enriched in pro residues; sequence SAPPQIPSRPARIPPGIPPGV. Over residues 847–864 the composition is skewed to low complexity; sequence PSRRAPAAPSRPTIIRPA.

Belongs to the TRAFAC class dynamin-like GTPase superfamily. Dynamin/Fzo/YdjA family. As to quaternary structure, oligomerizes into a helical polymer that self-assembles around the vesicle membrane, when associated to the menbrane through lipid binding. Interacts with SHANK1 and SHANK2. Interacts with SNX9. Interacts (via C-terminal proline-rich domain (PRD)) with SNX18 (via SH3 domain); this interaction regulates ATG9A and ATG16L1 trafficking from recycling endosomes to sites of autophagosome formation. Interacts with SNX33 (via SH3 domain). Interacts with MYO1E (via SH3 domain). Interacts with PSTPIP1 (via SH3 domain). Interacts with CTNND2. Interacts (via C-terminal proline-rich domain (PRD)) with BIN1 (via SH3 domain); this interaction allows the recruitment of DNM2 to the membrane tubules and inhibits self-assembly-stimulated GTPase activity on the membrane. Interacts with GABARAP, GABARAPL1 and GABARAPL2. Interacts with MAP1LC3B (the lipidate and non-lipidated LC3 form); this interaction mediates recycling endosome scission leading to autophagosome release. Interacts with ITSN1. Interacts (via C-terminal proline-rich domain (PRD)) with SH3BP4 (via SH3 domain); this interaction controls the GTPase activity and is prevented by EGFR-induced tyrosine phosphorylation of either DNM2 or SH3BP4. Interacts with MYOF. May interact with PIK3C3. May be a component of a complex composed of RAB5A (in GDP-bound form), DYN2 and PIK3C3. Interacts with SDC4; this interaction is markedly enhanced at focal ahesion site upon induction of focal adhesions and stress-fiber formation. Interacts with ACTN1. Interacts with CTTN; this interaction stimulates the intrinsic GTPase activity of DNM2 and stabilizes the association of DNM2 and actin filaments; in addition this interaction is stimulated by ligand binding to the receptor, leading to the recruitment of the DNM2-CTTN complex to the sequestered receptor-ligand complex to its internalization. Interacts with NOSTRIN (via SH3 domain); this interaction allows the recruitment of NOS3 to dynamin-positive structures. Interacts with TUBG1; this interaction may participate in centrosome cohesion. In terms of processing, phosphorylation at Ser-848 by GSK3-alpha relieves the inhibition of BIN1 and promotes endocytosis. Phosphorylation at Ser-764 by CDK1 is greatly increased upon mitotic entry. It regulates cytokinesis downstream of calcineurin, and does not affect clathrin-mediated endocytosis. Dephosphorylated by calcineurin/PP2 during cytokinesis in a Ca(2+)- and calmodulin-dependent manner. Phosphorylated on tyrosine residues by EGFR. Phosphorylated on tyrosine residues after activation of SRC. In terms of tissue distribution, expressed in most tissues during embryonic development, including the peripheral nervous system although no expression is evident in skeletal muscle or heart.

The protein localises to the cytoplasm. It is found in the cytoskeleton. It localises to the cytoplasmic vesicle. The protein resides in the clathrin-coated vesicle. Its subcellular location is the cell projection. The protein localises to the uropodium. It is found in the endosome. It localises to the microtubule organizing center. The protein resides in the centrosome. Its subcellular location is the centriole. The protein localises to the recycling endosome. It is found in the phagocytic cup. It localises to the phagosome membrane. The protein resides in the podosome. Its subcellular location is the cell junction. The protein localises to the postsynaptic density. It is found in the synapse. It localises to the synaptosome. The protein resides in the midbody. Its subcellular location is the membrane. The protein localises to the clathrin-coated pit. It catalyses the reaction GTP + H2O = GDP + phosphate + H(+). Functionally, catalyzes the hydrolysis of GTP and utilizes this energy to mediate vesicle scission at plasma membrane during endocytosis and filament remodeling at many actin structures during organization of the actin cytoskeleton. Plays an important role in vesicular trafficking processes, namely clathrin-mediated endocytosis (CME), exocytic and clathrin-coated vesicle from the trans-Golgi network, and PDGF stimulated macropinocytosis. During vesicular trafficking process, associates to the membrane, through lipid binding, and self-assembles into ring-like structure through oligomerization to form a helical polymer around the vesicle membrane and leading to vesicle scission. Plays a role in organization of the actin cytoskeleton by mediating arrangement of stress fibers and actin bundles in podocytes. During organization of the actin cytoskeleton, self-assembles into ring-like structure that directly bundles actin filaments to form typical membrane tubules decorated with dynamin spiral polymers. Self-assembly increases GTPase activity and the GTP hydrolysis causes the rapid depolymerization of dynamin spiral polymers, and results in dispersion of actin bundles. Remodels, through its interaction with CTTN, bundled actin filaments in a GTPase-dependent manner and plays a role in orchestrating the global actomyosin cytoskeleton. The interaction with CTTN stabilizes the interaction of DNM2 and actin filaments and stimulates the intrinsic GTPase activity that results in actin filament-barbed ends and increases the sensitivity of filaments in bundles to the actin depolymerizing factor, CFL1. Plays a role in the autophagy process, by participating in the formation of ATG9A vesicles destined for the autophagosomes through its interaction with SNX18, by mediating recycling endosome scission leading to autophagosome release through MAP1LC3B interaction. Also regulates maturation of apoptotic cell corpse-containing phagosomes by recruiting PIK3C3 to the phagosome membrane. Also plays a role in cytokinesis. May participate in centrosome cohesion through its interaction with TUBG1. Plays a role in the regulation of neuron morphology, axon growth and formation of neuronal growth cones. Involved in membrane tubulation. The polypeptide is Dynamin-2 (Mus musculus (Mouse)).